The primary structure comprises 716 residues: Polyribonucleotide nucleotidyltransferase (716 aa).

Residues aspartate 495 and aspartate 501 each coordinate Mg(2+). One can recognise a KH domain in the interval 562–621 (PRLFRIQINPEQIGLVIGPGGKTIRSITEQTGAKIDIEDTGAVTISAVDADSALRAKSII). In terms of domain architecture, S1 motif spans 631 to 699 (GDVYIGKVTR…QKGRVNLTRK (69 aa)).

It belongs to the polyribonucleotide nucleotidyltransferase family. Requires Mg(2+) as cofactor.

It is found in the cytoplasm. The catalysed reaction is RNA(n+1) + phosphate = RNA(n) + a ribonucleoside 5'-diphosphate. In terms of biological role, involved in mRNA degradation. Catalyzes the phosphorolysis of single-stranded polyribonucleotides processively in the 3'- to 5'-direction. In Synechococcus elongatus (strain ATCC 33912 / PCC 7942 / FACHB-805) (Anacystis nidulans R2), this protein is Polyribonucleotide nucleotidyltransferase.